A 447-amino-acid chain; its full sequence is Glutamate--tRNA ligase 1 (447 aa).

The 'HIGH' region motif lies at 10–20; it reads PSPTGMLHVGN. The 'KMSKS' region signature appears at 240-244; the sequence is KISKR. K243 lines the ATP pocket.

This sequence belongs to the class-I aminoacyl-tRNA synthetase family. Glutamate--tRNA ligase type 1 subfamily. In terms of assembly, monomer.

The protein localises to the cytoplasm. It catalyses the reaction tRNA(Glu) + L-glutamate + ATP = L-glutamyl-tRNA(Glu) + AMP + diphosphate. Functionally, catalyzes the attachment of glutamate to tRNA(Glu) in a two-step reaction: glutamate is first activated by ATP to form Glu-AMP and then transferred to the acceptor end of tRNA(Glu). The chain is Glutamate--tRNA ligase 1 from Rickettsia prowazekii (strain Madrid E).